The chain runs to 94 residues: Small ribosomal subunit protein bS6 (94 aa).

The protein belongs to the bacterial ribosomal protein bS6 family.

Binds together with bS18 to 16S ribosomal RNA. In Clostridium botulinum (strain Kyoto / Type A2), this protein is Small ribosomal subunit protein bS6.